Reading from the N-terminus, the 715-residue chain is Patatin-like phospholipase domain-containing protein ATEG_02594 (715 aa).

Residues W84 to T104 form a helical membrane-spanning segment. Positions L274–N465 constitute a PNPLA domain. Positions G305 to G309 match the GXSXG motif. The Nucleophile role is filled by S307. The active-site Proton acceptor is the D452. Residues T613–Q715 are disordered. Positions R652–D661 are enriched in basic and acidic residues. Positions A665 to A678 are enriched in polar residues.

This sequence belongs to the PLPL family.

The protein resides in the membrane. In terms of biological role, probable lipid hydrolase. This chain is Patatin-like phospholipase domain-containing protein ATEG_02594, found in Aspergillus terreus (strain NIH 2624 / FGSC A1156).